Here is a 113-residue protein sequence, read N- to C-terminus: Putative pterin-4-alpha-carbinolamine dehydratase (113 aa).

The protein belongs to the pterin-4-alpha-carbinolamine dehydratase family.

The catalysed reaction is (4aS,6R)-4a-hydroxy-L-erythro-5,6,7,8-tetrahydrobiopterin = (6R)-L-erythro-6,7-dihydrobiopterin + H2O. In Nitrosomonas eutropha (strain DSM 101675 / C91 / Nm57), this protein is Putative pterin-4-alpha-carbinolamine dehydratase.